The sequence spans 804 residues: Probable replication endonuclease from prophage-like region (804 aa).

Residues Y498 and Y502 each act as O-(5'-phospho-DNA)-tyrosine intermediate in the active site.

This sequence belongs to the phage GPA family.

In terms of biological role, possible endonuclease which induces a single-strand cut and initiates DNA replication. The polypeptide is Probable replication endonuclease from prophage-like region (Escherichia coli O6:H1 (strain CFT073 / ATCC 700928 / UPEC)).